We begin with the raw amino-acid sequence, 743 residues long: DNA ligase 2 (743 aa).

Residues 45-49 (DADFD), 94-95 (SL), and Glu125 each bind NAD(+). The N6-AMP-lysine intermediate role is filled by Lys127. NAD(+) contacts are provided by Arg148, Glu185, Lys301, and Lys325. Cys419, Cys422, Cys438, and Cys444 together coordinate Zn(2+). Residues 639–728 (EGPRPLEGLT…PERAKEAALP (90 aa)) enclose the BRCT domain. Positions 720–743 (ERAKEAALPVPEAAPAADPENSGE) are disordered. The span at 725-743 (AALPVPEAAPAADPENSGE) shows a compositional bias: low complexity.

Belongs to the NAD-dependent DNA ligase family. LigA subfamily. Mg(2+) is required as a cofactor. The cofactor is Mn(2+).

The catalysed reaction is NAD(+) + (deoxyribonucleotide)n-3'-hydroxyl + 5'-phospho-(deoxyribonucleotide)m = (deoxyribonucleotide)n+m + AMP + beta-nicotinamide D-nucleotide.. In terms of biological role, DNA ligase that catalyzes the formation of phosphodiester linkages between 5'-phosphoryl and 3'-hydroxyl groups in double-stranded DNA using NAD as a coenzyme and as the energy source for the reaction. It is essential for DNA replication and repair of damaged DNA. This chain is DNA ligase 2, found in Streptomyces griseus subsp. griseus (strain JCM 4626 / CBS 651.72 / NBRC 13350 / KCC S-0626 / ISP 5235).